Consider the following 642-residue polypeptide: Chaperone protein DnaK (642 aa).

Thr200 is modified (phosphothreonine; by autocatalysis). A compositionally biased stretch (low complexity) spans 608 to 618 (QAESQAAGEGQ). The tract at residues 608–642 (QAESQAAGEGQPDAGKKDDGNVVDAEFEEVKKDKQ) is disordered.

Belongs to the heat shock protein 70 family.

Acts as a chaperone. The protein is Chaperone protein DnaK of Laribacter hongkongensis (strain HLHK9).